A 906-amino-acid chain; its full sequence is Protein translocase subunit SecA (906 aa).

Residues Gln-87, 105 to 109, and Asp-507 contribute to the ATP site; that span reads GEGKT. A compositionally biased stretch (basic and acidic residues) spans 553–563; it reads RHESRRIDNQL. Disordered regions lie at residues 553–576 and 854–906; these read RHES…PGSS and LEEP…GRLA. Residues Cys-890, Cys-892, Cys-901, and His-902 each coordinate Zn(2+). A compositionally biased stretch (basic residues) spans 896–906; it reads KKYKQCHGRLA.

Belongs to the SecA family. Monomer and homodimer. Part of the essential Sec protein translocation apparatus which comprises SecA, SecYEG and auxiliary proteins SecDF-YajC and YidC. Zn(2+) serves as cofactor.

The protein resides in the cell inner membrane. The protein localises to the cytoplasm. The enzyme catalyses ATP + H2O + cellular proteinSide 1 = ADP + phosphate + cellular proteinSide 2.. Functionally, part of the Sec protein translocase complex. Interacts with the SecYEG preprotein conducting channel. Has a central role in coupling the hydrolysis of ATP to the transfer of proteins into and across the cell membrane, serving both as a receptor for the preprotein-SecB complex and as an ATP-driven molecular motor driving the stepwise translocation of polypeptide chains across the membrane. The polypeptide is Protein translocase subunit SecA (Methylococcus capsulatus (strain ATCC 33009 / NCIMB 11132 / Bath)).